We begin with the raw amino-acid sequence, 351 residues long: Translation initiation factor eIF2B subunit beta (351 aa).

It belongs to the eIF-2B alpha/beta/delta subunits family. As to quaternary structure, component of the translation initiation factor 2B (eIF2B) complex which is a heterodecamer of two sets of five different subunits: alpha, beta, gamma, delta and epsilon. Subunits alpha, beta and delta comprise a regulatory subcomplex and subunits epsilon and gamma comprise a catalytic subcomplex. Within the complex, the hexameric regulatory complex resides at the center, with the two heterodimeric catalytic subcomplexes bound on opposite sides.

It is found in the cytoplasm. Its subcellular location is the cytosol. With respect to regulation, activated by the chemical integrated stress response (ISR) inhibitor ISRIB which stimulates guanine nucleotide exchange factor activity for both phosphorylated and unphosphorylated eIF2. In terms of biological role, acts as a component of the translation initiation factor 2B (eIF2B) complex, which catalyzes the exchange of GDP for GTP on eukaryotic initiation factor 2 (eIF2) gamma subunit. Its guanine nucleotide exchange factor activity is repressed when bound to eIF2 complex phosphorylated on the alpha subunit, thereby limiting the amount of methionyl-initiator methionine tRNA available to the ribosome and consequently global translation is repressed. In Rattus norvegicus (Rat), this protein is Translation initiation factor eIF2B subunit beta (Eif2b2).